A 234-amino-acid polypeptide reads, in one-letter code: Ribosome-inactivating protein lychnin (234 aa).

A disulfide bridge links C32 with C115. E170 is an active-site residue.

As to quaternary structure, monomer.

The enzyme catalyses Endohydrolysis of the N-glycosidic bond at one specific adenosine on the 28S rRNA.. In terms of biological role, ribosome-inactivating protein of type 1, inhibits protein synthesis in animal cells. Inhibits cell-free translation in rabbit reticulocyte lysate system with an IC(50) of 0.17 nM. In Silene chalcedonica (Maltese-cross), this protein is Ribosome-inactivating protein lychnin.